A 145-amino-acid polypeptide reads, in one-letter code: Ribonuclease P protein component (145 aa).

The segment at 119-145 (PLPAAPGTMPPARTVRPSSPSPTEPEL) is disordered.

This sequence belongs to the RnpA family. In terms of assembly, consists of a catalytic RNA component (M1 or rnpB) and a protein subunit.

It catalyses the reaction Endonucleolytic cleavage of RNA, removing 5'-extranucleotides from tRNA precursor.. RNaseP catalyzes the removal of the 5'-leader sequence from pre-tRNA to produce the mature 5'-terminus. It can also cleave other RNA substrates such as 4.5S RNA. The protein component plays an auxiliary but essential role in vivo by binding to the 5'-leader sequence and broadening the substrate specificity of the ribozyme. The polypeptide is Ribonuclease P protein component (Xanthomonas euvesicatoria pv. vesicatoria (strain 85-10) (Xanthomonas campestris pv. vesicatoria)).